The sequence spans 192 residues: uncharacterized protein (192 aa).

Residues Gln-29–Ser-160 enclose the Nudix hydrolase domain. A Nudix box motif is present at residues Gly-67 to Ala-89. Residues Glu-83 and Glu-87 each coordinate Mg(2+).

The protein belongs to the Nudix hydrolase family. PCD1 subfamily. The cofactor is Mn(2+). Requires Mg(2+) as cofactor.

Probably mediates the hydrolysis of some nucleoside diphosphate derivatives. This is an uncharacterized protein from Salmonella newport (strain SL254).